The primary structure comprises 323 residues: CTD kinase subunit beta (323 aa).

The protein belongs to the cyclin family. As to quaternary structure, CTDK-I consists of three subunits, CTK1, CTK2 and CTK3 (also called alpha, beta and gamma). Interacts with CTK1. Heterodimerization with CTK3 is required to protect this subunit from degradation. Post-translationally, phosphorylated. Ubiquitinated. Phosphorylation and ubiquitination lead to degradation in growth-related way by the ubiquitin-proteasome pathway. Neither phosphorylation nor degradation requires association with CTK1.

The protein localises to the nucleus. Its subcellular location is the nucleolus. Functionally, cyclin subunit of the CTDK-I complex, which hyperphosphorylates the C-terminal heptapeptide repeat domain (CTD) of the largest RNA polymerase II subunit. CTDK-I phosphorylates 'Ser-5' if the CTD substrate is not phosphorylated at 'Ser-5', but will phosphorylate 'Ser-2' of a CTD substrate if 'Ser-5' is already phosphorylated. CTDK-I is also more reactive toward substrates that are prephosphorylated at 'Ser-2' or 'Ser-5' compared with an unphosphorylated CTD substrate, therefore efficiently creating doubly phosphorylated CTD repeats. Involved in RNA polymerase II transcriptional elongation, and as part of the CTDK-I complex, pre-mRNA 3'-end processing and SET2 mediated H3K36 methylation. Together with CTK3, required for CTK1 CTD kinase activation. Required for DNA damage induced transcription. Involved in the adaptation to alternative carbon sources, including galactose, glycerol and ethanol, but not raffinose. Required for the integrity of the rDNA locus. The polypeptide is CTD kinase subunit beta (CTK2) (Saccharomyces cerevisiae (strain ATCC 204508 / S288c) (Baker's yeast)).